Reading from the N-terminus, the 351-residue chain is Farnesyl pyrophosphate synthase (351 aa).

Isopentenyl diphosphate is bound by residues lysine 51, arginine 54, and glutamine 92. Positions 99 and 103 each coordinate Mg(2+). Residue arginine 108 coordinates dimethylallyl diphosphate. Residue arginine 109 participates in isopentenyl diphosphate binding. The dimethylallyl diphosphate site is built by lysine 196, threonine 197, glutamine 236, lysine 253, and lysine 262.

This sequence belongs to the FPP/GGPP synthase family. Mg(2+) serves as cofactor.

It carries out the reaction isopentenyl diphosphate + dimethylallyl diphosphate = (2E)-geranyl diphosphate + diphosphate. The enzyme catalyses isopentenyl diphosphate + (2E)-geranyl diphosphate = (2E,6E)-farnesyl diphosphate + diphosphate. It participates in isoprenoid biosynthesis; farnesyl diphosphate biosynthesis; farnesyl diphosphate from geranyl diphosphate and isopentenyl diphosphate: step 1/1. Its pathway is isoprenoid biosynthesis; geranyl diphosphate biosynthesis; geranyl diphosphate from dimethylallyl diphosphate and isopentenyl diphosphate: step 1/1. Functionally, farnesyl pyrophosphate synthase; part of the second module of ergosterol biosynthesis pathway that includes the middle steps of the pathway. ERG20 catalyzes the sequential condensation of isopentenyl pyrophosphate with dimethylallyl pyrophosphate, and then with the resultant geranylpyrophosphate to the ultimate product farnesyl pyrophosphate. The second module is carried out in the vacuole and involves the formation of farnesyl diphosphate, which is also an important intermediate in the biosynthesis of ubiquinone, dolichol, heme and prenylated proteins. Activity by the mevalonate kinase ERG12 first converts mevalonate into 5-phosphomevalonate. 5-phosphomevalonate is then further converted to 5-diphosphomevalonate by the phosphomevalonate kinase ERG8. The diphosphomevalonate decarboxylase MVD then produces isopentenyl diphosphate. The isopentenyl-diphosphate delta-isomerase IDI1 then catalyzes the 1,3-allylic rearrangement of the homoallylic substrate isopentenyl (IPP) to its highly electrophilic allylic isomer, dimethylallyl diphosphate (DMAPP). Finally the farnesyl diphosphate synthase ERG20 catalyzes the sequential condensation of isopentenyl pyrophosphate with dimethylallyl pyrophosphate, and then with the resultant geranylpyrophosphate to the ultimate product farnesyl pyrophosphate. The chain is Farnesyl pyrophosphate synthase from Candida albicans (strain SC5314 / ATCC MYA-2876) (Yeast).